The chain runs to 138 residues: Nucleoside diphosphate kinase (138 aa).

Lys-9, Phe-57, Arg-85, Thr-91, Arg-102, and Asn-112 together coordinate ATP. His-115 serves as the catalytic Pros-phosphohistidine intermediate.

This sequence belongs to the NDK family. As to quaternary structure, homotetramer. It depends on Mg(2+) as a cofactor.

The protein resides in the cytoplasm. The catalysed reaction is a 2'-deoxyribonucleoside 5'-diphosphate + ATP = a 2'-deoxyribonucleoside 5'-triphosphate + ADP. The enzyme catalyses a ribonucleoside 5'-diphosphate + ATP = a ribonucleoside 5'-triphosphate + ADP. Its function is as follows. Major role in the synthesis of nucleoside triphosphates other than ATP. The ATP gamma phosphate is transferred to the NDP beta phosphate via a ping-pong mechanism, using a phosphorylated active-site intermediate. The sequence is that of Nucleoside diphosphate kinase from Trichlorobacter lovleyi (strain ATCC BAA-1151 / DSM 17278 / SZ) (Geobacter lovleyi).